Consider the following 196-residue polypeptide: MGWWLFPILGYFIGSIPFSYLIPKWLKGIDVRKVGSGNVGATNAIRTTGPAVGGICLLLDALKGFFPVFITITFSGDSKIVSLTAIATVLGHDFPIFMKFKGGKGVASTLGIIFCLSWPTGLVFTLTWLVIVMLTKYASLGSLVALYVSALLGYLLKGYDTGMLFLILAVLSTLRHSENIQRLLNGTERKVNLFKR.

5 helical membrane passes run Gly-2–Ile-22, Val-52–Ile-72, Ile-80–Phe-100, Ile-112–Val-132, and Tyr-137–Leu-156.

It belongs to the PlsY family. As to quaternary structure, probably interacts with PlsX.

The protein localises to the cell inner membrane. It carries out the reaction an acyl phosphate + sn-glycerol 3-phosphate = a 1-acyl-sn-glycero-3-phosphate + phosphate. Its pathway is lipid metabolism; phospholipid metabolism. Catalyzes the transfer of an acyl group from acyl-phosphate (acyl-PO(4)) to glycerol-3-phosphate (G3P) to form lysophosphatidic acid (LPA). This enzyme utilizes acyl-phosphate as fatty acyl donor, but not acyl-CoA or acyl-ACP. The sequence is that of Glycerol-3-phosphate acyltransferase 2 from Thermotoga maritima (strain ATCC 43589 / DSM 3109 / JCM 10099 / NBRC 100826 / MSB8).